Here is a 319-residue protein sequence, read N- to C-terminus: Transaldolase (319 aa).

The active-site Schiff-base intermediate with substrate is the lysine 132.

It belongs to the transaldolase family. Type 1 subfamily. In terms of assembly, homodimer.

Its subcellular location is the cytoplasm. It catalyses the reaction D-sedoheptulose 7-phosphate + D-glyceraldehyde 3-phosphate = D-erythrose 4-phosphate + beta-D-fructose 6-phosphate. It functions in the pathway carbohydrate degradation; pentose phosphate pathway; D-glyceraldehyde 3-phosphate and beta-D-fructose 6-phosphate from D-ribose 5-phosphate and D-xylulose 5-phosphate (non-oxidative stage): step 2/3. Its function is as follows. Transaldolase is important for the balance of metabolites in the pentose-phosphate pathway. The protein is Transaldolase of Alteromonas mediterranea (strain DSM 17117 / CIP 110805 / LMG 28347 / Deep ecotype).